A 68-amino-acid chain; its full sequence is Beta-defensin 1 (68 aa).

The N-terminal stretch at 1-21 is a signal peptide; it reads MRTSYLLLFTLCLLMSEMASG. Positions 22–32 are excised as a propeptide; that stretch reads DNFLTGLGHRS. 3 cysteine pairs are disulfide-bonded: cysteine 37–cysteine 66, cysteine 44–cysteine 59, and cysteine 49–cysteine 67.

It belongs to the beta-defensin family. In terms of assembly, monomer. Homodimer.

Its subcellular location is the secreted. It is found in the membrane. Its function is as follows. Has bactericidal activity. May act as a ligand for C-C chemokine receptor CCR6. Positively regulates the sperm motility and bactericidal activity in a CCR6-dependent manner. Binds to CCR6 and triggers Ca2+ mobilization in the sperm which is important for its motility. The sequence is that of Beta-defensin 1 (DEFB1) from Presbytis melalophos (Mitred leaf monkey).